The sequence spans 331 residues: Barley B recombinant-like protein D (331 aa).

A coiled-coil region spans residues 43–101 (ALMNDRDNAIRERDHALAEKKAAIAERDMAFTQRDAAMAERNAAVVERDNALAALELAR). An alanine-zipper region spans residues 51–86 (AIRERDHALAEKKAAIAERDMAFTQRDAAMAERNAA). The span at 104–122 (GLNMNNGNGFPQGSLSGSK) shows a compositional bias: polar residues. 2 disordered regions span residues 104-140 (GLNM…PLQL) and 156-205 (AYPI…VGMS).

Belongs to the BBR/BPC family. Homodimer. Heterodimer.

It localises to the nucleus. Functionally, transcriptional regulator that specifically binds to GA-rich elements (GAGA-repeats) present in regulatory sequences of genes involved in developmental processes. The protein is Barley B recombinant-like protein D of Oryza sativa subsp. japonica (Rice).